The chain runs to 388 residues: Succinate--CoA ligase [ADP-forming] subunit beta (388 aa).

In terms of domain architecture, ATP-grasp spans 9 to 244 (KSLFAEYGLP…PSQDDAREAH (236 aa)). ATP is bound by residues K46, 53-55 (GRG), E99, T102, and E107. 2 residues coordinate Mg(2+): N199 and D213. Substrate is bound by residues N264 and 321–323 (GIV).

Belongs to the succinate/malate CoA ligase beta subunit family. As to quaternary structure, heterotetramer of two alpha and two beta subunits. The cofactor is Mg(2+).

It catalyses the reaction succinate + ATP + CoA = succinyl-CoA + ADP + phosphate. The catalysed reaction is GTP + succinate + CoA = succinyl-CoA + GDP + phosphate. The protein operates within carbohydrate metabolism; tricarboxylic acid cycle; succinate from succinyl-CoA (ligase route): step 1/1. In terms of biological role, succinyl-CoA synthetase functions in the citric acid cycle (TCA), coupling the hydrolysis of succinyl-CoA to the synthesis of either ATP or GTP and thus represents the only step of substrate-level phosphorylation in the TCA. The beta subunit provides nucleotide specificity of the enzyme and binds the substrate succinate, while the binding sites for coenzyme A and phosphate are found in the alpha subunit. The sequence is that of Succinate--CoA ligase [ADP-forming] subunit beta from Shewanella sp. (strain MR-4).